The chain runs to 239 residues: Sensory rhodopsin-1 (239 aa).

Over 1-3 (MDA) the chain is Extracellular. The chain crosses the membrane as a helical span at residues 4–25 (VATAYLGGAVALIVGVAFVWLL). The Cytoplasmic portion of the chain corresponds to 26–34 (YRSLDGSPH). Residues 35–56 (QSALAPLAIIPVFAGLSYVGMA) form a helical membrane-spanning segment. Topologically, residues 57-70 (YDIGTVIVNGNQIV) are extracellular. A helical transmembrane segment spans residues 71–92 (GLRYIDWLVTTPILVGYVGYAA). Topologically, residues 93-95 (GAS) are cytoplasmic. A helical membrane pass occupies residues 96–118 (RRSIIGVMVADALMIAVGAGAVV). The Extracellular portion of the chain corresponds to 119–122 (TDGT). Residues 123 to 150 (LKWALFGVSSIFHLSLFAYLYVIFPRVV) form a helical membrane-spanning segment. Residues 151-153 (PDV) lie on the Cytoplasmic side of the membrane. A helical transmembrane segment spans residues 154 to 181 (PEQIGLFNLLKNHIGLLWLAYPLVWLFG). At 182–189 (PAGIGEAT) the chain is on the extracellular side. Residues 190-222 (AAGVALTYVFLDVLAKVPYVYFFYARRRVFMHS) form a helical membrane-spanning segment. N6-(retinylidene)lysine is present on Lys-205. Over 223 to 239 (ESPPAPEQATVEATAAD) the chain is Cytoplasmic.

Belongs to the archaeal/bacterial/fungal opsin family. Interacts with HTR-I.

The protein localises to the cell membrane. Its function is as follows. Involved in the control of phototaxis. Mediates both photoattractant (in the orange light) and photophobic (in the near UV light) responses. The signal is then transmitted to the sensory rhodopsin I transducer (HTR-I). The chain is Sensory rhodopsin-1 (sopI) from Halobacterium salinarum (strain ATCC 29341 / DSM 671 / R1).